An 897-amino-acid polypeptide reads, in one-letter code: High molecular weight rhoptry protein 3 (897 aa).

Positions 1-24 (MRSKHLVTLFIITFLSFSTVKVWG) are cleaved as a signal peptide. Intrachain disulfides connect Cys-157/Cys-231, Cys-244/Cys-253, Cys-262/Cys-276, Cys-421/Cys-620, and Cys-475/Cys-536. A helical membrane pass occupies residues 597 to 615 (FVLYFISIISVLYINEYYY). Disordered regions lie at residues 788–845 (KEQS…SNLK) and 859–897 (QLDK…ENEL). Over residues 792-801 (KSTSAASTSD) the composition is skewed to polar residues. Positions 802-817 (EISGSEGPSTESTSTG) are enriched in low complexity. The residue at position 804 (Ser-804) is a Phosphoserine; by CDPK1. The span at 820–832 (GEDKTTDNTYKEM) shows a compositional bias: basic and acidic residues. Residues 865-876 (PKKKKSKRKKKR) are compositionally biased toward basic residues. The segment covering 877-889 (DSSSDRILLEESK) has biased composition (basic and acidic residues).

Component of the RhopH complex. RhopH complex is composed of CLAG3.1/CLAG3.2, RhopH2 and RhopH3 with a 1:1:1 subunit stoichiometry. Interacts with CLAG3.1/CLAG3.2. Interacts with CDPK1; the interaction promotes RhopH3 phosphorylation in merozoites. Proteolytically cleaved near C-terminus.

The protein resides in the host cell membrane. The protein localises to the parasitophorous vacuole membrane. Its subcellular location is the cytoplasm. It is found in the cytoplasmic vesicle. It localises to the secretory vesicle. The protein resides in the rhoptry. Participates in the formation of new permeability pathways in Plasmodium-infected erythrocytes enabling the uptake of nutrients from the blood plasma. Required for maintaining invasion capacity of merozoites. Required for the trophozoite to schizont developmental transition of the intracellular parasite. The protein is High molecular weight rhoptry protein 3 of Plasmodium falciparum (isolate 3D7).